The primary structure comprises 296 residues: MDILLANVSGLQFKAERDLIEQVGAIPLPFYGMDKSIAAVCNFITRNGQECDKGSACPFRHIRGDRTIVCKHWLRGLCKKGDQCEFLHEYDMTKMPECYFYSRFNACHNKECPFLHIDPQSKVKDCPWYKRGFCRHGPHCRHQHLRRVLCMDYLAGFCPEGPSCKHMHPHFELPPLAELGKDQLHKKLPTCHYCGELGHKANSCKQYVGSLEHRNNINAMDHSGGHSGGYSGHSGHIEGADDMQSNHHSQPHGPGFVKVPTPLEEITCYKCGNKGHYANKCPKGHLAFLSNQHSHK.

5 C3H1-type zinc fingers span residues 35-63, 64-91, 92-119, 120-147, and 149-171; these read KSIA…RHIR, GDRT…HEYD, MTKM…HIDP, QSKV…HLRR, and LCMD…HPHF. A CCHC-type 1 zinc finger spans residues 189 to 206; the sequence is PTCHYCGELGHKANSCKQ. The interval 222-254 is disordered; sequence HSGGHSGGYSGHSGHIEGADDMQSNHHSQPHGP. Residues 266 to 283 form a CCHC-type 2 zinc finger; it reads ITCYKCGNKGHYANKCPK.

Component of the cleavage and polyadenylation specificity factor (CPSF) complex, composed of at least Clp, Cpsf73, Cpsf100 and Cpsf160. During oogenesis, expression is detected in the germarium, in nurse cells, in the oocyte, and in the somatically derived follicular epithelial cells (at protein level). At oogenesis stage 12, nurse cells degenerate and their content is transferred into the oocyte. In larvae, expressed in all organs and disks (at protein level). In the larval salivary gland, expression is initially confined to cells at the anterior end but later expands throughout the entire gland (at protein level).

Its subcellular location is the nucleus. Its function is as follows. Component of the cleavage and polyadenylation specificity factor (CPSF) complex that plays a key role in pre-mRNA 3'-end formation, recognizing the AAUAAA signal sequence and interacting with poly(A) polymerase and other factors to bring about cleavage and poly(A) addition. Has endonuclease activity. Binds RNA polymers with a preference for G- and/or C-rich clusters. Binds single-stranded DNA non-specifically. The polypeptide is Cleavage and polyadenylation specificity factor subunit 4 (Clp) (Drosophila melanogaster (Fruit fly)).